The following is a 268-amino-acid chain: uncharacterized protein (268 aa).

This sequence belongs to the glycosyltransferase 2 family.

This is an uncharacterized protein from Bacillus subtilis (strain 168).